A 357-amino-acid chain; its full sequence is 4-hydroxymandelate synthase (357 aa).

2 consecutive VOC domains span residues 5 to 129 (EIDY…LIQR) and 158 to 309 (GIDH…IFTA). His161 provides a ligand contact to Fe cation. Substrate-binding residues include His161, Ser201, Thr214, His241, and Gln305. His241 contacts Fe cation. A Fe cation-binding site is contributed by Glu320.

It belongs to the 4HPPD family. Monomer. Requires Fe cation as cofactor.

It catalyses the reaction 3-(4-hydroxyphenyl)pyruvate + O2 = (S)-4-hydroxymandelate + CO2. It functions in the pathway antibiotic biosynthesis; vancomycin biosynthesis. In terms of biological role, required to synthesize hydroxyphenylglycine, a recurring skeletal component of nonproteinogenic macrocyclic peptide antibiotics such as vancomycin. Catalyzes the conversion of p-hydroxyphenylpyruvate to p-hydroxymandelate. The decarboxylation and hydroxylation activities of HmaS show novel and distinct regioselectivity, compared to all other known p-hydroxyphenylpyruvate dioxygenases, by hydroxylating the benzylic position of the substrate instead of the phenyl ring. This Amycolatopsis orientalis (Nocardia orientalis) protein is 4-hydroxymandelate synthase.